The sequence spans 257 residues: Achaete-scute complex protein T3 (257 aa).

One can recognise a bHLH domain in the interval 83–145 (PSVARRNARE…RIAVEYIRGL (63 aa)). Residues 161 to 221 (YNSADESSND…SEISGGGYIK (61 aa)) form a disordered region. 2 stretches are compositionally biased toward low complexity: residues 165 to 184 (DESS…LDSS) and 193 to 213 (QSAQ…SGSE).

As to quaternary structure, efficient DNA binding requires dimerization with another bHLH protein. As to expression, l(1)SC, SC and AC strongly label the presumptive stomatogastric nervous system, while ASE is more prominent in the presumptive procephalic lobe.

Functionally, AS-C proteins are involved in the determination of the neuronal precursors in the peripheral nervous system and the central nervous system. The protein is Achaete-scute complex protein T3 (l(1)sc) of Drosophila melanogaster (Fruit fly).